Here is a 61-residue protein sequence, read N- to C-terminus: MDPNCSCATGGSCTCANSCTCKACKCASCKKSCCSCCPVGCAKCAQGCICKGASDKCSCCA.

At M1 the chain carries N-acetylmethionine. The interval M1 to C29 is beta. C5, C7, C13, C15, C19, C21, C24, C26, C29, C33, C34, C36, C37, C41, C44, C48, C50, C57, C59, and C60 together coordinate a divalent metal cation. Residues K30 to A61 form an alpha region.

Belongs to the metallothionein superfamily. Type 1 family.

In terms of biological role, metallothioneins have a high content of cysteine residues that bind various heavy metals; these proteins are transcriptionally regulated by both heavy metals and glucocorticoids. This isoform may play a role in regulating the transport, accumulation, and compartmentation of zinc in the hippocampus. This chain is Metallothionein-II, hippocampal, found in Bos taurus (Bovine).